The following is a 264-amino-acid chain: Thymidylate synthase (264 aa).

Arg21 lines the dUMP pocket. His51 contacts (6R)-5,10-methylene-5,6,7,8-tetrahydrofolate. 126–127 (RR) is a dUMP binding site. The active-site Nucleophile is the Cys146. Residues 166–169 (RSAD), Asn177, and 207–209 (HLY) contribute to the dUMP site. Residue Asp169 coordinates (6R)-5,10-methylene-5,6,7,8-tetrahydrofolate. A (6R)-5,10-methylene-5,6,7,8-tetrahydrofolate-binding site is contributed by Ala263.

It belongs to the thymidylate synthase family. Bacterial-type ThyA subfamily. As to quaternary structure, homodimer.

It localises to the cytoplasm. It carries out the reaction dUMP + (6R)-5,10-methylene-5,6,7,8-tetrahydrofolate = 7,8-dihydrofolate + dTMP. It participates in pyrimidine metabolism; dTTP biosynthesis. Its function is as follows. Catalyzes the reductive methylation of 2'-deoxyuridine-5'-monophosphate (dUMP) to 2'-deoxythymidine-5'-monophosphate (dTMP) while utilizing 5,10-methylenetetrahydrofolate (mTHF) as the methyl donor and reductant in the reaction, yielding dihydrofolate (DHF) as a by-product. This enzymatic reaction provides an intracellular de novo source of dTMP, an essential precursor for DNA biosynthesis. In Thiobacillus denitrificans (strain ATCC 25259 / T1), this protein is Thymidylate synthase.